A 555-amino-acid polypeptide reads, in one-letter code: F-box only protein 33 (555 aa).

In terms of domain architecture, F-box spans 65–111; that stretch reads AAGAASLPSELIVHIFSFLPAPDRLRASASCSHWRECLFYPALWPQL.

Part of the SCF (SKP1-CUL1-F-box) E3 ubiquitin-protein ligase complex SCF(FBXO33) formed of CUL1, SKP1, RBX1 and FBXO33. Interacts via its N-terminus with YBX1 CSD domain. Directly interacts with SKP1 and CUL1.

It participates in protein modification; protein ubiquitination. Its function is as follows. Substrate recognition component of a SCF (SKP1-CUL1-F-box protein) E3 ubiquitin-protein ligase complex which mediates the ubiquitination and subsequent proteasomal degradation of target proteins. Probably recognizes and binds to phosphorylated target proteins. Recognizes YBX1. This is F-box only protein 33 (FBXO33) from Homo sapiens (Human).